We begin with the raw amino-acid sequence, 371 residues long: Cytochrome b (371 aa).

Helical transmembrane passes span 25-45, 69-90, 105-125, and 170-190; these read FGSM…FLAI, WIMQ…YIHI, WLSG…GYVL, and FFAL…IHIM. Residues histidine 75 and histidine 89 each coordinate heme b. Heme b is bound by residues histidine 174 and histidine 188. Histidine 193 lines the a ubiquinone pocket. 4 helical membrane passes run 218 to 238, 280 to 300, 312 to 332, and 339 to 358; these read HKDI…MSFS, LGGT…PFTH, IMQL…WAAT, and FTII…IMNP.

It belongs to the cytochrome b family. As to quaternary structure, the cytochrome bc1 complex contains 3 respiratory subunits (MT-CYB, CYC1 and UQCRFS1), 2 core proteins (UQCRC1 and UQCRC2) and probably 6 low-molecular weight proteins. Requires heme b as cofactor.

The protein localises to the mitochondrion inner membrane. Component of the ubiquinol-cytochrome c reductase complex (complex III or cytochrome b-c1 complex) that is part of the mitochondrial respiratory chain. The b-c1 complex mediates electron transfer from ubiquinol to cytochrome c. Contributes to the generation of a proton gradient across the mitochondrial membrane that is then used for ATP synthesis. In Coluber constrictor (Eastern racer), this protein is Cytochrome b (MT-CYB).